A 210-amino-acid polypeptide reads, in one-letter code: Syntaxin-binding protein 6 (210 aa).

Serine 2 carries the N-acetylserine modification. Residues 151 to 210 (GNSILHSAADSVTSAVQKASQALNERGERLGRAEEKTEDMKNSAQQFAETAHKLAMKHKC) form the v-SNARE coiled-coil homology domain.

In terms of assembly, part of a ternary complex containing SNAP25 and STX1A that can be dissociated by NAPA and NSF. Interacts with STX4A.

The protein resides in the cytoplasm. Its subcellular location is the membrane. In terms of biological role, forms non-fusogenic complexes with SNAP25 and STX1A and may thereby modulate the formation of functional SNARE complexes and exocytosis. The chain is Syntaxin-binding protein 6 (Stxbp6) from Mus musculus (Mouse).